The following is a 348-amino-acid chain: Tetraacyldisaccharide 4'-kinase (348 aa).

50–57 (TMGGTGKT) provides a ligand contact to ATP.

Belongs to the LpxK family.

It carries out the reaction a lipid A disaccharide + ATP = a lipid IVA + ADP + H(+). The protein operates within glycolipid biosynthesis; lipid IV(A) biosynthesis; lipid IV(A) from (3R)-3-hydroxytetradecanoyl-[acyl-carrier-protein] and UDP-N-acetyl-alpha-D-glucosamine: step 6/6. Transfers the gamma-phosphate of ATP to the 4'-position of a tetraacyldisaccharide 1-phosphate intermediate (termed DS-1-P) to form tetraacyldisaccharide 1,4'-bis-phosphate (lipid IVA). This is Tetraacyldisaccharide 4'-kinase from Desulfotalea psychrophila (strain LSv54 / DSM 12343).